The chain runs to 211 residues: Probable GTP-binding protein EngB (211 aa).

Residues leucine 21–glutamate 205 enclose the EngB-type G domain. Residues glycine 29–serine 36, glycine 54–lysine 58, aspartate 71–glycine 74, asparagine 151–aspartate 154, and isoleucine 184–alanine 186 contribute to the GTP site. Residues serine 36 and threonine 56 each coordinate Mg(2+).

The protein belongs to the TRAFAC class TrmE-Era-EngA-EngB-Septin-like GTPase superfamily. EngB GTPase family. The cofactor is Mg(2+).

In terms of biological role, necessary for normal cell division and for the maintenance of normal septation. This chain is Probable GTP-binding protein EngB, found in Pyrococcus abyssi (strain GE5 / Orsay).